We begin with the raw amino-acid sequence, 422 residues long: Putative acid phosphatase 5 (422 aa).

The signal sequence occupies residues Met-1–Gly-13. His-40 (nucleophile) is an active-site residue. Residues Asn-104, Asn-210, and Asn-218 are each glycosylated (N-linked (GlcNAc...) asparagine). 3 cysteine pairs are disulfide-bonded: Cys-152–Cys-363, Cys-205–Cys-302, and Cys-338–Cys-342. The active-site Proton donor is the Asp-279. N-linked (GlcNAc...) asparagine glycans are attached at residues Asn-312 and Asn-323.

It belongs to the histidine acid phosphatase family.

The enzyme catalyses a phosphate monoester + H2O = an alcohol + phosphate. This Caenorhabditis elegans protein is Putative acid phosphatase 5 (pho-5).